Here is a 534-residue protein sequence, read N- to C-terminus: Phosphoenolpyruvate carboxykinase (ATP) (534 aa).

Arg60, Tyr195, and Lys201 together coordinate substrate. ATP-binding positions include Lys201, His221, and 237–245 (GLSGTGKTT). Lys201 and His221 together coordinate Mn(2+). Mn(2+) is bound at residue Asp258. 3 residues coordinate ATP: Glu287, Arg324, and Thr449. Arg324 contributes to the substrate binding site.

Belongs to the phosphoenolpyruvate carboxykinase (ATP) family. It depends on Mn(2+) as a cofactor.

It localises to the cytoplasm. The enzyme catalyses oxaloacetate + ATP = phosphoenolpyruvate + ADP + CO2. Its pathway is carbohydrate biosynthesis; gluconeogenesis. Involved in the gluconeogenesis. Catalyzes the conversion of oxaloacetate (OAA) to phosphoenolpyruvate (PEP) through direct phosphoryl transfer between the nucleoside triphosphate and OAA. This Flavobacterium johnsoniae (strain ATCC 17061 / DSM 2064 / JCM 8514 / BCRC 14874 / CCUG 350202 / NBRC 14942 / NCIMB 11054 / UW101) (Cytophaga johnsonae) protein is Phosphoenolpyruvate carboxykinase (ATP).